The following is a 396-amino-acid chain: Serine/threonine-protein kinase VRK1 (396 aa).

One can recognise a Protein kinase domain in the interval 37 to 317 (WKVGLPIGQG…LLDYTEKPLY (281 aa)). ATP contacts are provided by residues 43–51 (IGQGGFGCI) and K71. K71 is covalently cross-linked (Glycyl lysine isopeptide (Lys-Gly) (interchain with G-Cter in SUMO2)). D177 serves as the catalytic Proton acceptor. S342 carries the phosphoserine; by PLK3 modification. Positions 354–396 (ITKKRKKEIEESKEPGVEDTEWSNTQTEEAIQTRSRTRKRVQK) are disordered. T355 carries the post-translational modification Phosphothreonine; by autocatalysis. Residues 360–369 (KEIEESKEPG) show a composition bias toward basic and acidic residues. Positions 375 to 387 (WSNTQTEEAIQTR) are enriched in polar residues. S376 carries the phosphoserine modification. Position 378 is a phosphothreonine (T378). Positions 387 to 393 (RSRTRKR) are required for interaction with the nucleosome.

The protein belongs to the protein kinase superfamily. CK1 Ser/Thr protein kinase family. VRK subfamily. As to quaternary structure, interacts with HDAC1, KAT2B, SETDB1, KDM3A and KDM4A. Associates with the nucleosome through interactions with nucleosome DNA, histone H2A and histone H2B; the interaction with H2A and H2B is mediated by the nucleosome acidic patch, a cluster of negatively charged residues of H2A and H2B forming a cleft within the nucleosome core. In terms of assembly, (Microbial infection) Interacts with vaccinia protein B12; this interaction inhibits the repressive activity of the vaccinia virus B12 pseudokinase on viral replication factory formation. Post-translationally, autophosphorylated at various serine and threonine residues. Autophosphorylation does not impair its ability to phosphorylate p53/TP53. Phosphorylation by PLK3 leads to induction of Golgi fragmentation during mitosis. As to expression, widely expressed. Highly expressed in fetal liver, testis and thymus.

It localises to the nucleus. The protein localises to the cytoplasm. The protein resides in the cajal body. The catalysed reaction is L-seryl-[protein] + ATP = O-phospho-L-seryl-[protein] + ADP + H(+). It carries out the reaction L-threonyl-[protein] + ATP = O-phospho-L-threonyl-[protein] + ADP + H(+). Its activity is regulated as follows. Active in presence of Mn(2+), Mg(2+) and Zn(2+), but is not functional with Ca(2+) or Cu(2+). Has a higher affinity for Mn(2+) than for Mg(2+). RAN inhibits its autophosphorylation and its ability to phosphorylate histone H3. Serine/threonine kinase involved in the regulation of key cellular processes including the cell cycle, nuclear condensation, transcription regulation, and DNA damage response. Controls chromatin organization and remodeling by mediating phosphorylation of histone H3 on 'Thr-4' and histone H2AX (H2aXT4ph). It also phosphorylates KAT5 in response to DNA damage, promoting KAT5 association with chromatin and histone acetyltransferase activity. Is involved in the regulation of cell cycle progression of neural progenitors, and is required for proper cortical neuronal migration. Is involved in neurite elongation and branching in motor neurons, and has an essential role in Cajal bodies assembly, acting through COIL phosphorylation and the control of coilin degradation. Involved in Golgi disassembly during the cell cycle: following phosphorylation by PLK3 during mitosis, it is required to induce Golgi fragmentation. Phosphorylates BANF1: disrupts its ability to bind DNA, reduces its binding to LEM domain-containing proteins and causes its relocalization from the nucleus to the cytoplasm. Phosphorylates TP53BP1 and p53/TP53 on 'Thr-18', preventing the interaction between p53/TP53 and MDM2. Phosphorylates ATF2 which activates its transcriptional activity. Phosphorylates JUN. The polypeptide is Serine/threonine-protein kinase VRK1 (Homo sapiens (Human)).